The following is a 362-amino-acid chain: Peptide chain release factor 1 (362 aa).

Q237 carries the N5-methylglutamine modification.

This sequence belongs to the prokaryotic/mitochondrial release factor family. In terms of processing, methylated by PrmC. Methylation increases the termination efficiency of RF1.

The protein localises to the cytoplasm. Peptide chain release factor 1 directs the termination of translation in response to the peptide chain termination codons UAG and UAA. The sequence is that of Peptide chain release factor 1 from Aliivibrio fischeri (strain ATCC 700601 / ES114) (Vibrio fischeri).